The following is a 240-amino-acid chain: EF-hand domain-containing protein D2 (240 aa).

At Ala2 the chain carries N-acetylalanine. Ser11 carries the phosphoserine modification. The segment at 13–38 is disordered; it reads RLQMEGEGGGETPEQPGLNGAAAAAA. A phosphoserine mark is found at Ser74 and Ser76. A Phosphotyrosine modification is found at Tyr83. EF-hand domains are found at residues 92–127 and 128–163; these read KQIK…LGAP and QTHL…AAAG. Ca(2+) is bound by residues Asp105, Asp109, Glu116, Asp141, Asp143, Asp145, Lys147, and Glu152. An N6-acetyllysine modification is found at Lys233.

As to quaternary structure, interacts with CASP9; with inactive form. In terms of tissue distribution, found in lymphocytes; preferentially expressed in CD8+ cells.

Its subcellular location is the membrane raft. May regulate B-cell receptor (BCR)-induced immature and primary B-cell apoptosis. Plays a role as negative regulator of the canonical NF-kappa-B-activating branch. Controls spontaneous apoptosis through the regulation of BCL2L1 abundance. The protein is EF-hand domain-containing protein D2 (EFHD2) of Homo sapiens (Human).